The chain runs to 110 residues: UPF0060 membrane protein PFL_4337 (110 aa).

Helical transmembrane passes span 5 to 25, 31 to 51, 59 to 79, and 84 to 104; these read LWFF…WMWL, ALWV…LTKV, AYAA…AVVE, and LGSD…ILFG.

It belongs to the UPF0060 family.

The protein localises to the cell inner membrane. This chain is UPF0060 membrane protein PFL_4337, found in Pseudomonas fluorescens (strain ATCC BAA-477 / NRRL B-23932 / Pf-5).